The following is a 515-amino-acid chain: MMSEDGYNTDFPRNPLYIFFSDFRSVLKFDELGLEIARIALPAALALTADPIASLVDTAFIGQIGPVELAAVGVSIALFNQVSRIAIFPLVSITTSFVAEEDACSSQQDTVRDHKECIEIGINNPTEETIELIPEKHKDSLSDEFKTSSSIFSISKPPAKKRNIPSASSALIIGGVLGLFQAVFLISAAKPLLSFMGVKHDSPMMRPSQRYLSLRSLGAPAVLLSLAAQGVFRGFKDTTTPLFATVIGDVTNIILDPIFIFVFRLGVTGAATAHVISQYLMCGILLWKLMGQVDIFNMSTKHLQFCRFMKNGFLLLMRVIAVTFCVTLSASLAAREGSTSMAAFQVCLQVWLATSLLADGYAVAGQAILASAFAKKDYKRAAATASRVLQLGLVLGFVLAVILGAGLHFGARVFTKDDKVLHLISIGLPFVAGTQPINALAFVFDGVNFGASDFGYAAASLVMVAIVSILCLLFLSSTHGFIGLWFGLTIYMSLRAAVGFWRIGTGTGPWSFLRS.

At 1–35 (MMSEDGYNTDFPRNPLYIFFSDFRSVLKFDELGLE) the chain is on the cytoplasmic side. The helical transmembrane segment at 36 to 56 (IARIALPAALALTADPIASLV) threads the bilayer. The Extracellular segment spans residues 57 to 58 (DT). A helical transmembrane segment spans residues 59–79 (AFIGQIGPVELAAVGVSIALF). Over 80-168 (NQVSRIAIFP…AKKRNIPSAS (89 aa)) the chain is Cytoplasmic. A helical membrane pass occupies residues 169 to 189 (SALIIGGVLGLFQAVFLISAA). Over 190 to 211 (KPLLSFMGVKHDSPMMRPSQRY) the chain is Extracellular. The helical transmembrane segment at 212 to 232 (LSLRSLGAPAVLLSLAAQGVF) threads the bilayer. Residues 233-242 (RGFKDTTTPL) are Cytoplasmic-facing. A helical membrane pass occupies residues 243-263 (FATVIGDVTNIILDPIFIFVF). Residues 264 to 266 (RLG) are Extracellular-facing. The helical transmembrane segment at 267–287 (VTGAATAHVISQYLMCGILLW) threads the bilayer. Topologically, residues 288 to 312 (KLMGQVDIFNMSTKHLQFCRFMKNG) are cytoplasmic. Residues 313 to 333 (FLLLMRVIAVTFCVTLSASLA) form a helical membrane-spanning segment. Topologically, residues 334–349 (AREGSTSMAAFQVCLQ) are extracellular. A helical membrane pass occupies residues 350-370 (VWLATSLLADGYAVAGQAILA). The Cytoplasmic segment spans residues 371-390 (SAFAKKDYKRAAATASRVLQ). The chain crosses the membrane as a helical span at residues 391–411 (LGLVLGFVLAVILGAGLHFGA). Over 412–423 (RVFTKDDKVLHL) the chain is Extracellular. The helical transmembrane segment at 424–444 (ISIGLPFVAGTQPINALAFVF) threads the bilayer. Residues 445 to 453 (DGVNFGASD) lie on the Cytoplasmic side of the membrane. The helical transmembrane segment at 454-474 (FGYAAASLVMVAIVSILCLLF) threads the bilayer. The Extracellular portion of the chain corresponds to 475-480 (LSSTHG). A helical transmembrane segment spans residues 481–501 (FIGLWFGLTIYMSLRAAVGFW). The Cytoplasmic segment spans residues 502 to 515 (RIGTGTGPWSFLRS).

This sequence belongs to the multi antimicrobial extrusion (MATE) (TC 2.A.66.1) family. As to expression, expressed in roots, but not in shoots. Detected in the mature regions of the root, extending from above the root-hair region to the root-shoot junction.

The protein localises to the cell membrane. Citrate transporter critical for aluminum tolerance. Responsible for citrate exudation into the rhizosphere to protect roots from aluminum toxicity. This is Protein DETOXIFICATION 42 from Arabidopsis thaliana (Mouse-ear cress).